The following is a 161-amino-acid chain: Eukaryotic translation initiation factor 5A-1 (161 aa).

Lysine 54 is modified (hypusine).

This sequence belongs to the eIF-5A family. In terms of processing, lys-54 undergoes hypusination, a unique post-translational modification that consists in the addition of a butylamino group from spermidine to lysine side chain, leading to the formation of the unusual amino acid hypusine. eIF-5As are the only known proteins to undergo this modification, which is essential for their function. Expressed specifically in the germline in the distal region of gonads where germ cells actively proliferate.

The protein localises to the cytoplasm. Translation factor that promotes translation elongation and termination, particularly upon ribosome stalling at specific amino acid sequence contexts. Binds between the exit (E) and peptidyl (P) site of the ribosome and promotes rescue of stalled ribosome: specifically required for efficient translation of polyproline-containing peptides as well as other motifs that stall the ribosome. Acts as a ribosome quality control (RQC) cofactor by joining the RQC complex to facilitate peptidyl transfer during CAT tailing step. Required for mitotic germ cell proliferation, gametogenesis after entry into meiosis, and localization of the P granule component pgl-1 on P granules. The protein is Eukaryotic translation initiation factor 5A-1 (iff-1) of Caenorhabditis elegans.